The sequence spans 171 residues: MTSTIYSDALFKLALKEDAIESIIEQFETFVSLARDYPDWIVLLDSPMIRNRVKNKMLTELGIFDALFMNFLMLLVRHHQVRLYEDIYEQWIAKSRLNQKIAYVQLYSAKPLSKKRLNQLKEEIQDYLPGLEIEFNQHIDPTLIEGVKMTYQGRSIERSLKKALDDMRTNI.

Belongs to the ATPase delta chain family. F-type ATPases have 2 components, F(1) - the catalytic core - and F(0) - the membrane proton channel. F(1) has five subunits: alpha(3), beta(3), gamma(1), delta(1), epsilon(1). F(0) has three main subunits: a(1), b(2) and c(10-14). The alpha and beta chains form an alternating ring which encloses part of the gamma chain. F(1) is attached to F(0) by a central stalk formed by the gamma and epsilon chains, while a peripheral stalk is formed by the delta and b chains.

It is found in the cell membrane. Its function is as follows. F(1)F(0) ATP synthase produces ATP from ADP in the presence of a proton or sodium gradient. F-type ATPases consist of two structural domains, F(1) containing the extramembraneous catalytic core and F(0) containing the membrane proton channel, linked together by a central stalk and a peripheral stalk. During catalysis, ATP synthesis in the catalytic domain of F(1) is coupled via a rotary mechanism of the central stalk subunits to proton translocation. In terms of biological role, this protein is part of the stalk that links CF(0) to CF(1). It either transmits conformational changes from CF(0) to CF(1) or is implicated in proton conduction. The polypeptide is ATP synthase subunit delta (Acholeplasma laidlawii (strain PG-8A)).